A 158-amino-acid chain; its full sequence is Lipoprotein signal peptidase (158 aa).

3 helical membrane-spanning segments follow: residues K4–T24, K63–I83, and Y88–I108. Active-site residues include D118 and D136. The helical transmembrane segment at I131 to L151 threads the bilayer.

This sequence belongs to the peptidase A8 family.

It localises to the cell membrane. It catalyses the reaction Release of signal peptides from bacterial membrane prolipoproteins. Hydrolyzes -Xaa-Yaa-Zaa-|-(S,diacylglyceryl)Cys-, in which Xaa is hydrophobic (preferably Leu), and Yaa (Ala or Ser) and Zaa (Gly or Ala) have small, neutral side chains.. Its pathway is protein modification; lipoprotein biosynthesis (signal peptide cleavage). In terms of biological role, this protein specifically catalyzes the removal of signal peptides from prolipoproteins. This is Lipoprotein signal peptidase from Staphylococcus haemolyticus (strain JCSC1435).